Here is a 107-residue protein sequence, read N- to C-terminus: Somatoliberin (107 aa).

A signal peptide spans 1 to 19; it reads MPLWVFFVILTLTNGSHCS. Residues 20-30 constitute a propeptide that is removed on maturation; sequence PSPSLPFRIRR. Position 74 is a leucine amide (Leu74). A propeptide spanning residues 77-107 is cleaved from the precursor; it reads QVDSMWADHRQMSLESLLAALLQKHSRDSQG.

Belongs to the glucagon family.

It localises to the secreted. GRF is released by the hypothalamus and acts on the adenohypophyse to stimulate the secretion of growth hormone. This chain is Somatoliberin (GHRH), found in Mesocricetus auratus (Golden hamster).